The primary structure comprises 160 residues: Cytochrome b6-f complex subunit 4 (160 aa).

Helical transmembrane passes span 36–56 (LLYI…GLAV), 95–115 (LLGI…PFIE), and 128–148 (VAMT…IGAA).

The protein belongs to the cytochrome b family. PetD subfamily. As to quaternary structure, the 4 large subunits of the cytochrome b6-f complex are cytochrome b6, subunit IV (17 kDa polypeptide, PetD), cytochrome f and the Rieske protein, while the 4 small subunits are PetG, PetL, PetM and PetN. The complex functions as a dimer.

It is found in the cellular thylakoid membrane. Component of the cytochrome b6-f complex, which mediates electron transfer between photosystem II (PSII) and photosystem I (PSI), cyclic electron flow around PSI, and state transitions. The polypeptide is Cytochrome b6-f complex subunit 4 (Synechococcus sp. (strain CC9902)).